The chain runs to 623 residues: DNA-directed RNA polymerase subunit beta' (623 aa).

4 residues coordinate Zn(2+): Cys70, Cys72, Cys85, and Cys88. 3 residues coordinate Mg(2+): Asp466, Asp468, and Asp470.

This sequence belongs to the RNA polymerase beta' chain family. RpoC1 subfamily. In plastids the minimal PEP RNA polymerase catalytic core is composed of four subunits: alpha, beta, beta', and beta''. When a (nuclear-encoded) sigma factor is associated with the core the holoenzyme is formed, which can initiate transcription. Requires Mg(2+) as cofactor. It depends on Zn(2+) as a cofactor.

Its subcellular location is the plastid. It is found in the chloroplast. It carries out the reaction RNA(n) + a ribonucleoside 5'-triphosphate = RNA(n+1) + diphosphate. DNA-dependent RNA polymerase catalyzes the transcription of DNA into RNA using the four ribonucleoside triphosphates as substrates. This chain is DNA-directed RNA polymerase subunit beta', found in Guillardia theta (Cryptophyte).